A 738-amino-acid chain; its full sequence is Phosphoribosylformylglycinamidine synthase subunit PurL (738 aa).

The active site involves His53. ATP is bound by residues Tyr56 and Lys95. Glu97 lines the Mg(2+) pocket. Substrate-binding positions include 98-101 (SHNH) and Arg120. Residue His99 is the Proton acceptor of the active site. A Mg(2+)-binding site is contributed by Asp121. A substrate-binding site is contributed by Gln244. A Mg(2+)-binding site is contributed by Asp274. Position 318 to 320 (318 to 320 (ESQ)) interacts with substrate. Residues Asp499 and Gly536 each contribute to the ATP site. Mg(2+) is bound at residue Asn537. Residue Ser539 participates in substrate binding.

It belongs to the FGAMS family. In terms of assembly, monomer. Part of the FGAM synthase complex composed of 1 PurL, 1 PurQ and 2 PurS subunits.

It localises to the cytoplasm. It carries out the reaction N(2)-formyl-N(1)-(5-phospho-beta-D-ribosyl)glycinamide + L-glutamine + ATP + H2O = 2-formamido-N(1)-(5-O-phospho-beta-D-ribosyl)acetamidine + L-glutamate + ADP + phosphate + H(+). It functions in the pathway purine metabolism; IMP biosynthesis via de novo pathway; 5-amino-1-(5-phospho-D-ribosyl)imidazole from N(2)-formyl-N(1)-(5-phospho-D-ribosyl)glycinamide: step 1/2. In terms of biological role, part of the phosphoribosylformylglycinamidine synthase complex involved in the purines biosynthetic pathway. Catalyzes the ATP-dependent conversion of formylglycinamide ribonucleotide (FGAR) and glutamine to yield formylglycinamidine ribonucleotide (FGAM) and glutamate. The FGAM synthase complex is composed of three subunits. PurQ produces an ammonia molecule by converting glutamine to glutamate. PurL transfers the ammonia molecule to FGAR to form FGAM in an ATP-dependent manner. PurS interacts with PurQ and PurL and is thought to assist in the transfer of the ammonia molecule from PurQ to PurL. The sequence is that of Phosphoribosylformylglycinamidine synthase subunit PurL from Leuconostoc mesenteroides subsp. mesenteroides (strain ATCC 8293 / DSM 20343 / BCRC 11652 / CCM 1803 / JCM 6124 / NCDO 523 / NBRC 100496 / NCIMB 8023 / NCTC 12954 / NRRL B-1118 / 37Y).